The primary structure comprises 197 residues: Xanthine phosphoribosyltransferase (197 aa).

L20 and N27 together coordinate xanthine. A128 to A132 is a binding site for 5-phospho-alpha-D-ribose 1-diphosphate. Position 156 (K156) interacts with xanthine.

It belongs to the purine/pyrimidine phosphoribosyltransferase family. Xpt subfamily. Homodimer.

The protein resides in the cytoplasm. The catalysed reaction is XMP + diphosphate = xanthine + 5-phospho-alpha-D-ribose 1-diphosphate. Its pathway is purine metabolism; XMP biosynthesis via salvage pathway; XMP from xanthine: step 1/1. Converts the preformed base xanthine, a product of nucleic acid breakdown, to xanthosine 5'-monophosphate (XMP), so it can be reused for RNA or DNA synthesis. This chain is Xanthine phosphoribosyltransferase, found in Bacillus mycoides (strain KBAB4) (Bacillus weihenstephanensis).